The sequence spans 349 residues: Divinyl chlorophyll a/b light-harvesting protein PcbE (349 aa).

6 consecutive transmembrane segments (helical) span residues Phe27–Leu47, Ile65–Gly85, Val88–Leu108, Val201–Ala221, Ala241–Cys261, and Leu308–Leu328.

It belongs to the PsbB/PsbC family. IsiA/Pcb subfamily. As to quaternary structure, the antenna complex consists of divinyl chlorophylls (a and b) and divinyl chlorophyll a/b binding proteins and binds more divinyl chlorophyll b than does the antenna complex from high-light-adapted Prochlorococcus. The cofactor is divinyl chlorophyll a. Divinyl chlorophyll b serves as cofactor.

The protein localises to the cellular thylakoid membrane. In terms of biological role, the antenna complex functions as a light receptor, it captures and delivers excitation energy to photosystems II and I. The Prochlorales pcb genes are not related to higher plant LHCs. The polypeptide is Divinyl chlorophyll a/b light-harvesting protein PcbE (pcbE) (Prochlorococcus marinus (strain NATL2A)).